A 1291-amino-acid polypeptide reads, in one-letter code: Period circadian protein homolog 1 (1291 aa).

The segment at 1–134 (MSGPLEGADG…SSEQSARART (134 aa)) is disordered. An interaction with BTRC region spans residues 1-151 (MSGPLEGADG…LRELKLRLPP (151 aa)). A compositionally biased stretch (low complexity) spans 48-115 (NSNGSSGNES…AYSLLSASSE (68 aa)). A compositionally biased stretch (polar residues) spans 116–132 (QDNPSTSGCSSEQSARA). Phosphothreonine; by CSNK1E is present on T121. Phosphoserine; by CSNK1E occurs at positions 122 and 126. The Nuclear export signal 1 motif lies at 138 to 147 (LMTALRELKL). 2 PAS domains span residues 208–275 (ITSE…PSRL) and 348–414 (YEAP…KILQ). The region spanning 422 to 465 (HSPIRFCARNGEYVTMDTSWAGFVHPWSRKVAFVLGRHKVRTAP) is the PAC domain. The Nuclear export signal 2 motif lies at 489 to 498 (LSEQIHRLLL). Disordered stretches follow at residues 508 to 544 (GLCG…PAPV) and 647 to 698 (TKRK…KEPV). 2 stretches are compositionally biased toward low complexity: residues 513–533 (GPLM…SNGG) and 652–662 (ASSSSYTASSA). Residues 596-815 (ELEVAPVPDQ…GLDTSSVAPS (220 aa)) form a required for phosphorylation by CSNK1E region. Phosphoserine is present on residues S661, S663, and S704. 3 disordered regions span residues 749–772 (GLAP…TPDA), 809–873 (TSSV…PPAT), and 938–1037 (SQAP…ALSG). Residues 751-769 (APGPAPSPAPSPTVAPDPT) show a composition bias toward pro residues. The residue at position 815 (S815) is a Phosphoserine. The short motif at 824–840 (IPPGRRHHCRSKAKRSR) is the Nuclear localization signal element. Residues 827–846 (GRRHHCRSKAKRSRHHHHQT) are compositionally biased toward basic residues. 2 stretches are compositionally biased toward pro residues: residues 859–873 (SPVP…PPAT) and 955–965 (PSLPPPPLSPP). A compositionally biased stretch (polar residues) spans 973–985 (FNSRCSSPLQLNL). Phosphoserine is present on residues S978 and S979. Residues 981 to 988 (LQLNLLQL) carry the Nuclear export signal 3 motif. Residues 1042–1046 (LELLL) carry the LXXLL motif. The segment covering 1051-1061 (RSGTGSAASGS) has biased composition (low complexity). 2 disordered regions span residues 1051–1099 (RSGT…YFGS) and 1207–1291 (SVQD…NSTS). Gly residues predominate over residues 1062–1076 (LGSGLGSGSGSGSHE). Residues 1077–1094 (GGSTSASITRSSQSSHTS) show a composition bias toward low complexity. The tract at residues 1148 to 1291 (SRDAASVLKQ…ALPAEENSTS (144 aa)) is CRY binding domain. Residues 1235–1248 (GEGGGCGVGGGGGD) show a composition bias toward gly residues. Over residues 1253-1267 (AQTQIGAKGSSSQDS) the composition is skewed to polar residues.

Homodimer. Component of the circadian core oscillator, which includes the CRY proteins, CLOCK or NPAS2, BMAL1 or BMAL2, CSNK1D and/or CSNK1E, TIMELESS, and the PER proteins. Interacts directly with TIMELESS. Interacts directly with PER2, PER3, CRY1 and CRY2. Interacts with BMAL1 and CLOCK. Interacts with GPRASP1. Interacts (phosphorylated) with BTRC and FBXW11; the interactions trigger proteasomal degradation. Interacts with NONO and SFPQ. Interacts with WDR5. Interacts with U2AF1L4 (Isoform 3). Interacts with USP2. Interacts with HNF4A. Phosphorylated on serine residues by CSNK1D, CSNK1E and probably also by CSNK1G2. Phosphorylation by CSNK1D or CSNK1E promotes nuclear location of PER proteins as well as ubiquitination and subsequent degradation. May be dephosphorylated by PP1. Post-translationally, ubiquitinated; requires phosphorylation by CSNK1E and interaction with BTRC and FBXW11. Deubiquitinated by USP2. In brain, highest expression is observed in the SCN. Highly expressed in the pyramidal cell layer of the piriform cortex, the periventricular part of the caudate-putamen, many thalamic nuclei, and the granular layer of the cerebellar cortex. Weaker expression is detected in most area of the brain, including cortical and non cortical structures. Expression but no oscillations occurs in the glomerular and mitral cell layers of the olfactory bulb, the internal granular layer of the cerebellum, the cornu ammonis and dentate gyrus of the hippocampus, the cerebral and piriform cortices. Expressed in the renal cortex (at protein level). Also found in heart, brain, bladder, lumbar spinal cord, spleen, lung, liver, skeletal muscle and testis.

It localises to the nucleus. The protein resides in the cytoplasm. Transcriptional repressor which forms a core component of the circadian clock. The circadian clock, an internal time-keeping system, regulates various physiological processes through the generation of approximately 24 hour circadian rhythms in gene expression, which are translated into rhythms in metabolism and behavior. It is derived from the Latin roots 'circa' (about) and 'diem' (day) and acts as an important regulator of a wide array of physiological functions including metabolism, sleep, body temperature, blood pressure, endocrine, immune, cardiovascular, and renal function. Consists of two major components: the central clock, residing in the suprachiasmatic nucleus (SCN) of the brain, and the peripheral clocks that are present in nearly every tissue and organ system. Both the central and peripheral clocks can be reset by environmental cues, also known as Zeitgebers (German for 'timegivers'). The predominant Zeitgeber for the central clock is light, which is sensed by retina and signals directly to the SCN. The central clock entrains the peripheral clocks through neuronal and hormonal signals, body temperature and feeding-related cues, aligning all clocks with the external light/dark cycle. Circadian rhythms allow an organism to achieve temporal homeostasis with its environment at the molecular level by regulating gene expression to create a peak of protein expression once every 24 hours to control when a particular physiological process is most active with respect to the solar day. Transcription and translation of core clock components (CLOCK, NPAS2, BMAL1, BMAL2, PER1, PER2, PER3, CRY1 and CRY2) plays a critical role in rhythm generation, whereas delays imposed by post-translational modifications (PTMs) are important for determining the period (tau) of the rhythms (tau refers to the period of a rhythm and is the length, in time, of one complete cycle). A diurnal rhythm is synchronized with the day/night cycle, while the ultradian and infradian rhythms have a period shorter and longer than 24 hours, respectively. Disruptions in the circadian rhythms contribute to the pathology of cardiovascular diseases, cancer, metabolic syndromes and aging. A transcription/translation feedback loop (TTFL) forms the core of the molecular circadian clock mechanism. Transcription factors, CLOCK or NPAS2 and BMAL1 or BMAL2, form the positive limb of the feedback loop, act in the form of a heterodimer and activate the transcription of core clock genes and clock-controlled genes (involved in key metabolic processes), harboring E-box elements (5'-CACGTG-3') within their promoters. The core clock genes: PER1/2/3 and CRY1/2 which are transcriptional repressors form the negative limb of the feedback loop and interact with the CLOCK|NPAS2-BMAL1|BMAL2 heterodimer inhibiting its activity and thereby negatively regulating their own expression. This heterodimer also activates nuclear receptors NR1D1/2 and RORA/B/G, which form a second feedback loop and which activate and repress BMAL1 transcription, respectively. Regulates circadian target genes expression at post-transcriptional levels, but may not be required for the repression at transcriptional level. Controls PER2 protein decay. Represses CRY2 preventing its repression on CLOCK/BMAL1 target genes such as FXYD5 and SCNN1A in kidney and PPARA in liver. Besides its involvement in the maintenance of the circadian clock, has an important function in the regulation of several processes. Participates in the repression of glucocorticoid receptor NR3C1/GR-induced transcriptional activity by reducing the association of NR3C1/GR to glucocorticoid response elements (GREs) by BMAL1:CLOCK. Plays a role in the modulation of the neuroinflammatory state via the regulation of inflammatory mediators release, such as CCL2 and IL6. In spinal astrocytes, negatively regulates the MAPK14/p38 and MAPK8/JNK MAPK cascades as well as the subsequent activation of NFkappaB. Coordinately regulates the expression of multiple genes that are involved in the regulation of renal sodium reabsorption. Can act as gene expression activator in a gene and tissue specific manner, in kidney enhances WNK1 and SLC12A3 expression in collaboration with CLOCK. Modulates hair follicle cycling. Represses the CLOCK-BMAL1 induced transcription of BHLHE40/DEC1. The protein is Period circadian protein homolog 1 (Per1) of Mus musculus (Mouse).